A 251-amino-acid polypeptide reads, in one-letter code: uncharacterized protein (251 aa).

This is an uncharacterized protein from Methanothermus fervidus.